The following is a 385-amino-acid chain: 1-deoxy-D-xylulose 5-phosphate reductoisomerase (385 aa).

The NADPH site is built by Thr10, Gly11, Ser12, Ile13, Lys37, and Asn124. Lys125 serves as a coordination point for 1-deoxy-D-xylulose 5-phosphate. Residue Glu126 coordinates NADPH. Residue Asp150 participates in Mn(2+) binding. Positions 151, 152, 176, and 199 each coordinate 1-deoxy-D-xylulose 5-phosphate. A Mn(2+)-binding site is contributed by Glu152. Residue Gly205 participates in NADPH binding. Residues Ser212, Asn217, Lys218, and Glu221 each contribute to the 1-deoxy-D-xylulose 5-phosphate site. Glu221 is a Mn(2+) binding site.

This sequence belongs to the DXR family. Mg(2+) serves as cofactor. The cofactor is Mn(2+).

It carries out the reaction 2-C-methyl-D-erythritol 4-phosphate + NADP(+) = 1-deoxy-D-xylulose 5-phosphate + NADPH + H(+). Its pathway is isoprenoid biosynthesis; isopentenyl diphosphate biosynthesis via DXP pathway; isopentenyl diphosphate from 1-deoxy-D-xylulose 5-phosphate: step 1/6. Its function is as follows. Catalyzes the NADPH-dependent rearrangement and reduction of 1-deoxy-D-xylulose-5-phosphate (DXP) to 2-C-methyl-D-erythritol 4-phosphate (MEP). This is 1-deoxy-D-xylulose 5-phosphate reductoisomerase from Clostridium botulinum (strain 657 / Type Ba4).